Here is a 500-residue protein sequence, read N- to C-terminus: Endothelial lipase (500 aa).

A signal peptide spans 1–20 (MSNSVPLLCFWSLCYCFAAG). An intrachain disulfide couples Cys-64 to Cys-77. N-linked (GlcNAc...) asparagine glycans are attached at residues Asn-80 and Asn-136. The active-site Nucleophile is Ser-169. Catalysis depends on Asp-193, which acts as the Charge relay system. Cys-252 and Cys-272 are oxidised to a cystine. His-274 serves as the catalytic Charge relay system. 2 disulfide bridges follow: Cys-297–Cys-316 and Cys-308–Cys-311. Residue 325–337 (KMRNKRNSKMYLK) coordinates heparin. The PLAT domain maps to 347–482 (YHYQMKIHVF…SPGRELWFRK (136 aa)). Asn-393, Asn-469, and Asn-491 each carry an N-linked (GlcNAc...) asparagine glycan. Cys-463 and Cys-483 form a disulfide bridge.

This sequence belongs to the AB hydrolase superfamily. Lipase family. Head to tail homodimer. As to expression, high level of expression in the liver, placenta, lung, thyroid, kidney, testis and in the corpus luteum of the ovary. Expressed also in coronary artery endothelial cells, umbilical vein endothelial cells and in hepatocytes and osteosarcoma cell lines. Not detected in heart, brain and muscle.

It is found in the secreted. The enzyme catalyses a triacylglycerol + H2O = a diacylglycerol + a fatty acid + H(+). The catalysed reaction is a 1,2-diacyl-sn-glycero-3-phosphocholine + H2O = a 2-acyl-sn-glycero-3-phosphocholine + a fatty acid + H(+). It catalyses the reaction 1,2,3-tri-(9Z-octadecenoyl)-glycerol + H2O = di-(9Z)-octadecenoylglycerol + (9Z)-octadecenoate + H(+). It carries out the reaction 1,2,3-tributanoylglycerol + H2O = dibutanoylglycerol + butanoate + H(+). The enzyme catalyses 1,2-dihexadecanoyl-sn-glycero-3-phosphocholine + H2O = hexadecanoyl-sn-glycero-3-phosphocholine + hexadecanoate + H(+). Inhibited by serum and NaCl. Functionally, exerts both phospholipase and triglyceride lipase activities. More active as a phospholipase than a triglyceride lipase. Hydrolyzes triglycerides, both with short-chain fatty acyl groups (tributyrin) and long-chain fatty acyl groups (triolein) with similar levels of activity toward both types of substrates. Hydrolyzes high density lipoproteins (HDL) more efficiently than other lipoproteins. The polypeptide is Endothelial lipase (LIPG) (Homo sapiens (Human)).